Here is a 330-residue protein sequence, read N- to C-terminus: Ribosomal RNA small subunit methyltransferase C (330 aa).

It belongs to the methyltransferase superfamily. RsmC family. Monomer.

The protein resides in the cytoplasm. It catalyses the reaction guanosine(1207) in 16S rRNA + S-adenosyl-L-methionine = N(2)-methylguanosine(1207) in 16S rRNA + S-adenosyl-L-homocysteine + H(+). Specifically methylates the guanine in position 1207 of 16S rRNA in the 30S particle. This chain is Ribosomal RNA small subunit methyltransferase C, found in Haemophilus influenzae (strain PittGG).